Consider the following 90-residue polypeptide: Large ribosomal subunit protein bL31B-1 (90 aa).

This sequence belongs to the bacterial ribosomal protein bL31 family. Type B subfamily. Part of the 50S ribosomal subunit.

In Streptomyces coelicolor (strain ATCC BAA-471 / A3(2) / M145), this protein is Large ribosomal subunit protein bL31B-1.